A 346-amino-acid chain; its full sequence is Holliday junction branch migration complex subunit RuvB (346 aa).

Residues 1-182 (MSEAARLIAP…FGIPVRLNFY (182 aa)) are large ATPase domain (RuvB-L). ATP is bound by residues Leu-21, Arg-22, Gly-63, Lys-66, Thr-67, Thr-68, 129 to 131 (EDF), Arg-172, Tyr-182, and Arg-219. Mg(2+) is bound at residue Thr-67. The tract at residues 183–253 (TVEELELIVR…IADEALTRLL (71 aa)) is small ATPAse domain (RuvB-S). Residues 256-346 (SMGLDQLDRR…SQFRLTLEDD (91 aa)) are head domain (RuvB-H). Positions 292, 311, and 316 each coordinate DNA.

It belongs to the RuvB family. Homohexamer. Forms an RuvA(8)-RuvB(12)-Holliday junction (HJ) complex. HJ DNA is sandwiched between 2 RuvA tetramers; dsDNA enters through RuvA and exits via RuvB. An RuvB hexamer assembles on each DNA strand where it exits the tetramer. Each RuvB hexamer is contacted by two RuvA subunits (via domain III) on 2 adjacent RuvB subunits; this complex drives branch migration. In the full resolvosome a probable DNA-RuvA(4)-RuvB(12)-RuvC(2) complex forms which resolves the HJ.

It is found in the cytoplasm. The enzyme catalyses ATP + H2O = ADP + phosphate + H(+). Functionally, the RuvA-RuvB-RuvC complex processes Holliday junction (HJ) DNA during genetic recombination and DNA repair, while the RuvA-RuvB complex plays an important role in the rescue of blocked DNA replication forks via replication fork reversal (RFR). RuvA specifically binds to HJ cruciform DNA, conferring on it an open structure. The RuvB hexamer acts as an ATP-dependent pump, pulling dsDNA into and through the RuvAB complex. RuvB forms 2 homohexamers on either side of HJ DNA bound by 1 or 2 RuvA tetramers; 4 subunits per hexamer contact DNA at a time. Coordinated motions by a converter formed by DNA-disengaged RuvB subunits stimulates ATP hydrolysis and nucleotide exchange. Immobilization of the converter enables RuvB to convert the ATP-contained energy into a lever motion, pulling 2 nucleotides of DNA out of the RuvA tetramer per ATP hydrolyzed, thus driving DNA branch migration. The RuvB motors rotate together with the DNA substrate, which together with the progressing nucleotide cycle form the mechanistic basis for DNA recombination by continuous HJ branch migration. Branch migration allows RuvC to scan DNA until it finds its consensus sequence, where it cleaves and resolves cruciform DNA. This chain is Holliday junction branch migration complex subunit RuvB, found in Sinorhizobium medicae (strain WSM419) (Ensifer medicae).